Reading from the N-terminus, the 537-residue chain is Zinc finger and BTB domain-containing protein 18 (537 aa).

The region spanning 24 to 91 (CDSTVLVGDA…MYEGKLQFKS (68 aa)) is the BTB domain. The segment covering 122-143 (TAEADSTKREEDTSSCSDKVES) has biased composition (basic and acidic residues). 2 disordered regions span residues 122–232 (TAEA…RVSA) and 335–355 (ASEL…LGGD). Low complexity-rich tracts occupy residues 182–195 (RLPS…TTSP) and 208–229 (SPAG…ASRR). 4 consecutive C2H2-type zinc fingers follow at residues 385–407 (FMCP…LSTH), 425–447 (PTCS…ERTH), 453–475 (YTCT…AVVH), and 481–504 (HACK…RKFH).

Belongs to the krueppel C2H2-type zinc-finger protein family. ZBTB18 subfamily.

It is found in the nucleus. In terms of biological role, transcriptional repressor that plays a role in various developmental processes. Specifically binds the consensus DNA sequence 5'-[AC]ACATCTG[GT][AC]-3' which contains the E box core, and acts by recruiting chromatin remodeling multiprotein complexes. The chain is Zinc finger and BTB domain-containing protein 18 (zbtb18) from Danio rerio (Zebrafish).